The chain runs to 512 residues: Citrate synthase (512 aa).

Active-site residues include histidine 288, histidine 327, and aspartate 383. The interval 483 to 512 (AIPKTATGSKSQLSASIEQSFGEKISPQSH) is disordered. Polar residues predominate over residues 488-501 (ATGSKSQLSASIEQ).

This sequence belongs to the citrate synthase family.

It is found in the cytoplasm. It carries out the reaction oxaloacetate + acetyl-CoA + H2O = citrate + CoA + H(+). It participates in carbohydrate metabolism; tricarboxylic acid cycle; isocitrate from oxaloacetate: step 1/2. The sequence is that of Citrate synthase (gltA) from Dictyostelium discoideum (Social amoeba).